The primary structure comprises 403 residues: Renin (403 aa).

The first 22 residues, 1 to 22 (MARCRMPRWGLLLVLWGSCTFG), serve as a signal peptide directing secretion. The propeptide at 23-65 (LPADTGAFRRIFLKKMPSIRESLKERGVDVAGLGAEWNQFTKR) is activation peptide. Asparagine 70 carries an N-linked (GlcNAc...) asparagine glycan. The region spanning 85–400 (YYGEIGIGTP…DRHNNRIGFA (316 aa)) is the Peptidase A1 domain. Aspartate 103 is a catalytic residue. The cysteines at positions 116 and 123 are disulfide-linked. N-linked (GlcNAc...) asparagine glycosylation is present at asparagine 140. Cysteine 279 and cysteine 283 are oxidised to a cystine. Aspartate 288 is an active-site residue. Cysteine 322 and cysteine 359 are disulfide-bonded.

Belongs to the peptidase A1 family. In terms of assembly, interacts with ATP6AP2.

Its subcellular location is the secreted. It is found in the membrane. It catalyses the reaction Cleavage of Leu-|-Xaa bond in angiotensinogen to generate angiotensin I.. Interaction with ATP6AP2 results in a 5-fold increased efficiency in angiotensinogen processing. In terms of biological role, renin is a highly specific endopeptidase, whose only known function is to generate angiotensin I from angiotensinogen in the plasma, initiating a cascade of reactions that produce an elevation of blood pressure and increased sodium retention by the kidney. The protein is Renin (REN) of Canis lupus familiaris (Dog).